A 185-amino-acid polypeptide reads, in one-letter code: Ribosome-recycling factor (185 aa).

Position 162 is an N6-acetyllysine (Lys-162).

This sequence belongs to the RRF family.

It localises to the cytoplasm. Its function is as follows. Responsible for the release of ribosomes from messenger RNA at the termination of protein biosynthesis. May increase the efficiency of translation by recycling ribosomes from one round of translation to another. This chain is Ribosome-recycling factor, found in Shigella boydii serotype 18 (strain CDC 3083-94 / BS512).